Consider the following 64-residue polypeptide: Tracheal antimicrobial peptide (64 aa).

Residues Met-1–Gly-26 form the signal peptide. 3 disulfides stabilise this stretch: Cys-31-Cys-60, Cys-38-Cys-53, and Cys-43-Cys-61.

It belongs to the beta-defensin family. LAP/TAP subfamily. In terms of tissue distribution, tracheal epithelium.

Its subcellular location is the secreted. Functionally, has antibacterial activity in vitro against Escherichia coli, Staphylococcus aureus, Klebsiella pneumonia, and Pseudomonas aeruginosa. In addition, the peptide is active against Candida albicans, indicating a broad spectrum of activity. The polypeptide is Tracheal antimicrobial peptide (Bos taurus (Bovine)).